The sequence spans 462 residues: Tissue alpha-L-fucosidase (462 aa).

An N-terminal signal peptide occupies residues 1–28 (MWDLKSEWWAVGFGLLLLLAASAQAGGL). N-linked (GlcNAc...) asparagine glycans are attached at residues N237, N264, and N378.

It belongs to the glycosyl hydrolase 29 family. In terms of assembly, homotetramer.

The protein resides in the lysosome. It catalyses the reaction an alpha-L-fucoside + H2O = L-fucose + an alcohol. The enzyme catalyses a neolactoside IV(2)-alpha-Fuc-nLc4Cer(d18:1(4E)) + H2O = a neolactoside nLc4Cer(d18:1(4E)) + L-fucose. It carries out the reaction a neolactoside IV(2)-alpha-Fuc-nLc4Cer(d18:0) + H2O = a neolactoside nLc4Cer(d18:0) + L-fucose. In terms of biological role, alpha-L-fucosidase is responsible for hydrolyzing the alpha-1,6-linked fucose joined to the reducing-end N-acetylglucosamine of the carbohydrate moieties of glycoproteins. This Rattus norvegicus (Rat) protein is Tissue alpha-L-fucosidase (Fuca1).